We begin with the raw amino-acid sequence, 444 residues long: MLRNDTITAIATPPGEGSIAIVRVSGPDAISISDRIFSGNIAGYASHTAHLGTVSHNAVCIDQALVLVMRAPRSFTGEDIVEFQCHGGYFACSQIVNALLAEGARAALPGEFSQRAFLNGKIDLIQAEAIQQLIAADNIDAFRIAQNQFQGHTSQAISSISSLIIEALAYIEVLADFPEEDIETEDSLPKHRIMEALSITDELLSSFDEGQRLAQGTSIVLAGLPNAGKSSILNALTQKNRAIVTDIPGTTRDILEENWVLQGKNLRLIDSAGLRETENLVEKEGIARAREAMSQAEGILWVVDASQPLPEFPTILYQKPTILLWNKCDIVSPPQIEVPFQQISVSAKTGEGLLELKQALQKWLNTTQLGKSSKIFLVSARHHSLLHSVYTCLTAALNGFTEHLPNECIALDLRQALHSIGNLSGSEVTENVLGEIFSKFCIGK.

(6S)-5-formyl-5,6,7,8-tetrahydrofolate is bound by residues R23, E82, and K121. The region spanning G216–N365 is the TrmE-type G domain. N226 serves as a coordination point for K(+). GTP is bound by residues N226–S231, T245–T251, and D270–G273. Mg(2+) is bound at residue S230. K(+) is bound by residues T245, I247, and T250. T251 is a Mg(2+) binding site. K444 provides a ligand contact to (6S)-5-formyl-5,6,7,8-tetrahydrofolate.

Belongs to the TRAFAC class TrmE-Era-EngA-EngB-Septin-like GTPase superfamily. TrmE GTPase family. As to quaternary structure, homodimer. Heterotetramer of two MnmE and two MnmG subunits. K(+) is required as a cofactor.

Its subcellular location is the cytoplasm. Its function is as follows. Exhibits a very high intrinsic GTPase hydrolysis rate. Involved in the addition of a carboxymethylaminomethyl (cmnm) group at the wobble position (U34) of certain tRNAs, forming tRNA-cmnm(5)s(2)U34. The polypeptide is tRNA modification GTPase MnmE (Chlamydia trachomatis serovar L2 (strain ATCC VR-902B / DSM 19102 / 434/Bu)).